The primary structure comprises 590 residues: Zinc finger protein 703 (590 aa).

A compositionally biased stretch (polar residues) spans 1 to 14 (MSDSPAGSNPRTPE). Disordered regions lie at residues 1 to 43 (MSDS…DPLR), 96 to 293 (CSQI…AGHV), and 341 to 366 (LVGG…LTGA). N-acetylserine is present on S2. 4 stretches are compositionally biased toward low complexity: residues 27–37 (PAVPAAVSLLP), 128–139 (RSAPGAASAAAA), 171–189 (GSSS…PGDK), and 207–219 (APVS…SSPG). The span at 241-251 (ELDKKDQEPKP) shows a compositional bias: basic and acidic residues. At S252 the chain carries Phosphoserine. Composition is skewed to gly residues over residues 260–273 (RGGG…GGAE) and 341–352 (LVGGQLSGGLGL). The segment at 456–484 (HSCNWVAASGPCDKRFATSEELLSHLRTH) adopts a C2H2-type zinc-finger fold. R580 carries the omega-N-methylarginine modification.

This sequence belongs to the Elbow/Noc family. As to quaternary structure, interacts with TLE4; increases transcriptional repression. Interacts with DCAF7 and PHB2. May interact with HSPD1. In terms of tissue distribution, expressed in mammary epithelium.

It is found in the nucleus. The protein resides in the cytoplasm. Functionally, transcriptional corepressor which does not bind directly to DNA and may regulate transcription through recruitment of histone deacetylases to gene promoters. Regulates cell adhesion, migration and proliferation. May be required for segmental gene expression during hindbrain development. In Homo sapiens (Human), this protein is Zinc finger protein 703 (ZNF703).